The sequence spans 158 residues: uncharacterized protein (158 aa).

Positions 1-16 are cleaved as a signal peptide; the sequence is MFRPILILTILSCVLA. The N-linked (GlcNAc...) asparagine glycan is linked to Asn122.

This is an uncharacterized protein from Caenorhabditis elegans.